Reading from the N-terminus, the 115-residue chain is uncharacterized protein (115 aa).

2 consecutive transmembrane segments (helical) span residues 11 to 31 (FLYLIVAMVILCPLGILLVWN) and 85 to 105 (GYIISAIVGVILCVGAYYALI).

This sequence to M.thermoautotrophicum MTH1706.

It localises to the cell membrane. This is an uncharacterized protein from Methanocaldococcus jannaschii (strain ATCC 43067 / DSM 2661 / JAL-1 / JCM 10045 / NBRC 100440) (Methanococcus jannaschii).